The following is a 431-amino-acid chain: Trigger factor (431 aa).

A PPIase FKBP-type domain is found at 161-246 (DDRVTIDFVG…LKKVENIVLP (86 aa)).

Belongs to the FKBP-type PPIase family. Tig subfamily.

Its subcellular location is the cytoplasm. It catalyses the reaction [protein]-peptidylproline (omega=180) = [protein]-peptidylproline (omega=0). Its function is as follows. Involved in protein export. Acts as a chaperone by maintaining the newly synthesized protein in an open conformation. Functions as a peptidyl-prolyl cis-trans isomerase. This Glaesserella parasuis serovar 5 (strain SH0165) (Haemophilus parasuis) protein is Trigger factor.